A 319-amino-acid polypeptide reads, in one-letter code: Ribonuclease Z (319 aa).

Residues H62, H64, D66, H67, H145, D215, and H273 each contribute to the Zn(2+) site. D66 (proton acceptor) is an active-site residue.

This sequence belongs to the RNase Z family. As to quaternary structure, homodimer. Requires Zn(2+) as cofactor.

The enzyme catalyses Endonucleolytic cleavage of RNA, removing extra 3' nucleotides from tRNA precursor, generating 3' termini of tRNAs. A 3'-hydroxy group is left at the tRNA terminus and a 5'-phosphoryl group is left at the trailer molecule.. Functionally, zinc phosphodiesterase, which displays some tRNA 3'-processing endonuclease activity. Probably involved in tRNA maturation, by removing a 3'-trailer from precursor tRNA. This chain is Ribonuclease Z, found in Borrelia duttonii (strain Ly).